The sequence spans 505 residues: AMP phosphorylase (505 aa).

AMP contacts are provided by residues glycine 170, serine 196–serine 201, and threonine 205. Residue aspartate 258 is the Proton donor of the active site. AMP-binding residues include serine 266 and lysine 290.

The protein belongs to the thymidine/pyrimidine-nucleoside phosphorylase family. Type 2 subfamily.

The catalysed reaction is AMP + phosphate = alpha-D-ribose 1,5-bisphosphate + adenine. It catalyses the reaction CMP + phosphate = cytosine + alpha-D-ribose 1,5-bisphosphate. The enzyme catalyses UMP + phosphate = alpha-D-ribose 1,5-bisphosphate + uracil. In terms of biological role, catalyzes the conversion of AMP and phosphate to adenine and ribose 1,5-bisphosphate (R15P). Exhibits phosphorylase activity toward CMP and UMP in addition to AMP. Functions in an archaeal AMP degradation pathway, together with R15P isomerase and RubisCO. The protein is AMP phosphorylase of Methanococcus maripaludis (strain C5 / ATCC BAA-1333).